We begin with the raw amino-acid sequence, 406 residues long: Putative ankyrin repeat protein RF_0266 (406 aa).

ANK repeat units follow at residues 68 to 98 (TSHS…DINN), 103 to 129 (NYIT…QDDI), 130 to 161 (KVQN…IIKP), 163 to 189 (HIEL…DIEK), and 203 to 232 (SIDC…KPEQ).

This chain is Putative ankyrin repeat protein RF_0266, found in Rickettsia felis (strain ATCC VR-1525 / URRWXCal2) (Rickettsia azadi).